Consider the following 304-residue polypeptide: MLNAPFELVTSLGFAAFVLLLIALPIAFWSVSSDSRPGVVRLLVAVANLLLTAQLVLRWWQSGHFPISNLYESLCFLAWACTLTQLLVERAWPSPIVAAAATPMGLGCIAFASFALPDQLQSAAPLVPALRSSWLVMHVSVIMVSYAALLVGSLLSLAVLVMDRGEALQLRSSSIGSGGFRQAVTTPDSGFLELQSLEISTNEQLDSLSYRTITVGFLMLTVGIISGAVWANEAWGSYWSWDPKETWALICWLVYAAYLHTRLSRGWQGRRPALVAVVGLIVIAVCYIGVNLLGIGLHSYGWFF.

8 consecutive transmembrane segments (helical) span residues leucine 8–phenylalanine 28, proline 37–leucine 57, glycine 63–leucine 83, isoleucine 96–leucine 116, valine 141–valine 161, threonine 212–asparagine 232, threonine 246–leucine 263, and valine 275–isoleucine 295.

Belongs to the CcmF/CycK/Ccl1/NrfE/CcsA family. May interact with ccs1.

It localises to the cellular thylakoid membrane. Required during biogenesis of c-type cytochromes (cytochrome c6 and cytochrome f) at the step of heme attachment. This Synechococcus sp. (strain CC9902) protein is Cytochrome c biogenesis protein CcsA.